Reading from the N-terminus, the 200-residue chain is Small ribosomal subunit protein eS1 (200 aa).

This sequence belongs to the eukaryotic ribosomal protein eS1 family. In terms of assembly, part of the 30S ribosomal subunit.

In Thermococcus kodakarensis (strain ATCC BAA-918 / JCM 12380 / KOD1) (Pyrococcus kodakaraensis (strain KOD1)), this protein is Small ribosomal subunit protein eS1.